A 147-amino-acid polypeptide reads, in one-letter code: 3-dehydroquinate dehydratase (147 aa).

Tyrosine 24 functions as the Proton acceptor in the catalytic mechanism. Residues asparagine 75, histidine 81, and aspartate 88 each contribute to the substrate site. The active-site Proton donor is histidine 101. Residues isoleucine 102–serine 103 and arginine 112 contribute to the substrate site.

This sequence belongs to the type-II 3-dehydroquinase family. As to quaternary structure, homododecamer.

The catalysed reaction is 3-dehydroquinate = 3-dehydroshikimate + H2O. Its pathway is metabolic intermediate biosynthesis; chorismate biosynthesis; chorismate from D-erythrose 4-phosphate and phosphoenolpyruvate: step 3/7. Functionally, catalyzes a trans-dehydration via an enolate intermediate. The protein is 3-dehydroquinate dehydratase of Cereibacter sphaeroides (strain ATCC 17029 / ATH 2.4.9) (Rhodobacter sphaeroides).